Consider the following 463-residue polypeptide: Probable glucan endo-1,3-beta-glucosidase eglC (463 aa).

A signal peptide spans 1–18; the sequence is MQLTHLLAFALSLATSEA. An N-linked (GlcNAc...) asparagine glycan is attached at N84. E128 (proton donor) is an active-site residue. A glycan (N-linked (GlcNAc...) asparagine) is linked at N183. Catalysis depends on E239, which acts as the Nucleophile. N312 is a glycosylation site (N-linked (GlcNAc...) asparagine). Disordered stretches follow at residues 317 to 354 and 396 to 430; these read SASASSSAAGSATPVGSAVPSGSAAVNPSSSGIVSSAV and SGSSATSTTAGSSSDSSSTNSGKSSSESSSTNSGA. G440 carries GPI-anchor amidated glycine lipidation. A propeptide spans 441–463 (removed in mature form); it reads GASSVSGSVFGALVAVFAFVATL.

It belongs to the glycosyl hydrolase 17 family. The GPI-anchor is attached to the protein in the endoplasmic reticulum and serves to target the protein to the cell surface. There, the glucosamine-inositol phospholipid moiety is cleaved off and the GPI-modified mannoprotein is covalently attached via its lipidless GPI glycan remnant to the 1,6-beta-glucan of the outer cell wall layer.

The protein resides in the cell membrane. The protein localises to the secreted. It localises to the cell wall. The catalysed reaction is Hydrolysis of (1-&gt;3)-beta-D-glucosidic linkages in (1-&gt;3)-beta-D-glucans.. Functionally, glucanases play a role in cell expansion during growth, in cell-cell fusion during mating, and in spore release during sporulation. This enzyme may be involved in beta-glucan degradation and also function biosynthetically as a transglycosylase. The chain is Probable glucan endo-1,3-beta-glucosidase eglC (eglC) from Aspergillus oryzae (strain ATCC 42149 / RIB 40) (Yellow koji mold).